Consider the following 305-residue polypeptide: tRNA uridine(34) hydroxylase (305 aa).

The Rhodanese domain maps to 130-228; that stretch reads DDPDTLVIDT…YLGEIPEQES (99 aa). C188 acts as the Cysteine persulfide intermediate in catalysis.

It belongs to the TrhO family.

The enzyme catalyses uridine(34) in tRNA + AH2 + O2 = 5-hydroxyuridine(34) in tRNA + A + H2O. Its function is as follows. Catalyzes oxygen-dependent 5-hydroxyuridine (ho5U) modification at position 34 in tRNAs. This Synechococcus sp. (strain CC9902) protein is tRNA uridine(34) hydroxylase.